Consider the following 195-residue polypeptide: UPF0314 protein RHECIAT_CH0004233 (195 aa).

Helical transmembrane passes span 15–35 (FWFV…YLMG), 64–84 (WYTP…YLIL), 127–147 (GDSI…FFFA), and 150–170 (APVA…GYVI).

It belongs to the UPF0314 family.

It localises to the cell membrane. The protein is UPF0314 protein RHECIAT_CH0004233 of Rhizobium etli (strain CIAT 652).